We begin with the raw amino-acid sequence, 348 residues long: UDP-glucose 4-epimerase (348 aa).

NAD(+) contacts are provided by residues 12-14, 33-37, 66-67, Phe-88, and Lys-92; these read GYI, DNFHN, and DI. Residue 132–134 coordinates substrate; that stretch reads SAT. Catalysis depends on Tyr-157, which acts as the Proton acceptor. Residues Lys-161 and Tyr-185 each contribute to the NAD(+) site. Residues 185 to 187, 206 to 208, 224 to 226, Arg-239, and 300 to 303 contribute to the substrate site; these read YFN, NNL, NVF, and REGD.

Belongs to the NAD(P)-dependent epimerase/dehydratase family. Homodimer. The cofactor is NAD(+).

It carries out the reaction UDP-alpha-D-glucose = UDP-alpha-D-galactose. It catalyses the reaction UDP-N-acetyl-alpha-D-glucosamine = UDP-N-acetyl-alpha-D-galactosamine. It functions in the pathway carbohydrate metabolism; galactose metabolism. Its function is as follows. Catalyzes two distinct but analogous reactions: the reversible epimerization of UDP-glucose to UDP-galactose and the reversible epimerization of UDP-N-acetylglucosamine to UDP-N-acetylgalactosamine. The reaction with UDP-Gal plays a critical role in the Leloir pathway of galactose catabolism in which galactose is converted to the glycolytic intermediate glucose 6-phosphate. It contributes to the catabolism of dietary galactose and enables the endogenous biosynthesis of both UDP-Gal and UDP-GalNAc when exogenous sources are limited. Both UDP-sugar interconversions are important in the synthesis of glycoproteins and glycolipids. The chain is UDP-glucose 4-epimerase from Homo sapiens (Human).